Consider the following 95-residue polypeptide: Nucleoid-associated protein MARTH_orf159 (95 aa).

It belongs to the YbaB/EbfC family. In terms of assembly, homodimer.

It localises to the cytoplasm. The protein localises to the nucleoid. In terms of biological role, binds to DNA and alters its conformation. May be involved in regulation of gene expression, nucleoid organization and DNA protection. The sequence is that of Nucleoid-associated protein MARTH_orf159 from Metamycoplasma arthritidis (strain 158L3-1) (Mycoplasma arthritidis).